The sequence spans 811 residues: Protein VAC14 homolog (811 aa).

7 HEAT repeats span residues aspartate 81–glycine 119, phenylalanine 122–glutamine 160, isoleucine 240–lysine 278, glutamine 334–lysine 372, leucine 375–lysine 412, serine 431–glycine 469, and isoleucine 472–serine 510. Residues threonine 775–serine 785 are compositionally biased toward low complexity. A disordered region spans residues threonine 775–glutamine 811.

It belongs to the VAC14 family. In terms of assembly, component of the PI(3,5)P2 regulatory complex, composed of ATG18, FIG4, FAB1, VAC14 and VAC7. VAC14 nucleates the assembly of the complex and serves as a scaffold.

The protein resides in the cytoplasm. It localises to the vacuole membrane. Its function is as follows. The PI(3,5)P2 regulatory complex regulates both the synthesis and turnover of phosphatidylinositol 3,5-bisphosphate (PtdIns(3,5)P2). Regulates the synthesis of PtdIns(3,5)P2 by positive activation of FAB1 and by controlling FIG4 localization. The chain is Protein VAC14 homolog from Schizosaccharomyces pombe (strain 972 / ATCC 24843) (Fission yeast).